A 602-amino-acid chain; its full sequence is Elongation factor 4 (602 aa).

Positions 7–189 constitute a tr-type G domain; sequence SRIRNFCIIA…AVVDRVPAPA (183 aa). GTP-binding positions include 19–24 and 136–139; these read DHGKST and NKID.

It belongs to the TRAFAC class translation factor GTPase superfamily. Classic translation factor GTPase family. LepA subfamily.

Its subcellular location is the cell inner membrane. It catalyses the reaction GTP + H2O = GDP + phosphate + H(+). Functionally, required for accurate and efficient protein synthesis under certain stress conditions. May act as a fidelity factor of the translation reaction, by catalyzing a one-codon backward translocation of tRNAs on improperly translocated ribosomes. Back-translocation proceeds from a post-translocation (POST) complex to a pre-translocation (PRE) complex, thus giving elongation factor G a second chance to translocate the tRNAs correctly. Binds to ribosomes in a GTP-dependent manner. The sequence is that of Elongation factor 4 from Synechococcus sp. (strain CC9902).